We begin with the raw amino-acid sequence, 309 residues long: Eugenol synthase 2 (309 aa).

Residues 13-16 (TGYI), 35-45 (VRETTVSDPVK), Arg-36, 86-88 (FMQ), 111-113 (SEF), Lys-134, and 154-156 (NCF) each bind NADP(+). Lys-134 functions as the Proton donor/acceptor in the catalytic mechanism.

It belongs to the NmrA-type oxidoreductase family. As to expression, mostly expressed in petals, and, to a lower extent, in sepals, stamens and pistils.

It catalyses the reaction eugenol + a carboxylate + NADP(+) = a coniferyl ester + NADPH. The catalysed reaction is eugenol + acetate + NADP(+) = (E)-coniferyl acetate + NADPH. Its pathway is aromatic compound metabolism; phenylpropanoid biosynthesis. Its function is as follows. Catalyzes the synthesis of the phenylpropene eugenol from coniferyl acetate. Phenylpropenes are produced by plants as defense compounds with antimicrobial and antianimal properties, or as floral attractants of pollinators. This Clarkia breweri (Fairy fans) protein is Eugenol synthase 2.